The primary structure comprises 2131 residues: Protein Ycf2 (2131 aa).

ATP is bound at residue 1466–1473 (GSIGTGRS).

The protein belongs to the Ycf2 family.

It localises to the plastid. Its subcellular location is the chloroplast stroma. Its function is as follows. Probable ATPase of unknown function. Its presence in a non-photosynthetic plant (Epifagus virginiana) and experiments in tobacco indicate that it has an essential function which is probably not related to photosynthesis. This chain is Protein Ycf2, found in Helianthus annuus (Common sunflower).